A 72-amino-acid polypeptide reads, in one-letter code: Large ribosomal subunit protein bL31 (72 aa).

Cys-16, Cys-18, Cys-38, and Cys-41 together coordinate Zn(2+).

It belongs to the bacterial ribosomal protein bL31 family. Type A subfamily. In terms of assembly, part of the 50S ribosomal subunit. It depends on Zn(2+) as a cofactor.

In terms of biological role, binds the 23S rRNA. The polypeptide is Large ribosomal subunit protein bL31 (Azoarcus sp. (strain BH72)).